Here is a 319-residue protein sequence, read N- to C-terminus: Thymidylate synthase (319 aa).

Residues Arg-25 and 181–182 contribute to the dUMP site; that span reads RR. The Nucleophile role is filled by Cys-201. DUMP contacts are provided by residues 221–224, Asn-232, and 262–264; these read RSAD and HIY. Asp-224 serves as a coordination point for (6R)-5,10-methylene-5,6,7,8-tetrahydrofolate. Ala-318 contacts (6R)-5,10-methylene-5,6,7,8-tetrahydrofolate.

This sequence belongs to the thymidylate synthase family. Bacterial-type ThyA subfamily. Homodimer.

It localises to the cytoplasm. It catalyses the reaction dUMP + (6R)-5,10-methylene-5,6,7,8-tetrahydrofolate = 7,8-dihydrofolate + dTMP. The protein operates within pyrimidine metabolism; dTTP biosynthesis. Functionally, catalyzes the reductive methylation of 2'-deoxyuridine-5'-monophosphate (dUMP) to 2'-deoxythymidine-5'-monophosphate (dTMP) while utilizing 5,10-methylenetetrahydrofolate (mTHF) as the methyl donor and reductant in the reaction, yielding dihydrofolate (DHF) as a by-product. This enzymatic reaction provides an intracellular de novo source of dTMP, an essential precursor for DNA biosynthesis. The chain is Thymidylate synthase from Oenococcus oeni (strain ATCC BAA-331 / PSU-1).